The sequence spans 378 residues: MAKRDYYEVLGVAKNASDDEIKKAYRKLAMKYHPDRNPDNKDAEEHFKEAKEAYEMLSDGQKRAAYDQYGHAGVDPNMAGAGGQGFGGFADAFGDIFGDIFGQAAGGAARGGRGGPQVYRGADLRYSMEITLEQAAHGYDTQIRVPSWVSCEVCHGSGAKPGTKPETCPTCHGQGTVRMSQGFFSIQQTCPKCHGTGTYIPEPCAHCHGSGKVKETKTLEVKIPAGIDDGMRIRSAGNGEPGINGGPPGDLYVEIHIKPHAVFERDGDDLHCQMPIPFTTAALGGEIEVPTLAGRASFPVPEGTQSGKTFRLRGKGIKGLRSSIAGDLYVHVQVETPVKLTDQQRDLLKQFEKSLAEGGARHSPQSKSWFDRMKSFFE.

The 66-residue stretch at aspartate 5–glycine 70 folds into the J domain. Residues glycine 138–threonine 216 form a CR-type zinc finger. Residues cysteine 151, cysteine 154, cysteine 168, cysteine 171, cysteine 190, cysteine 193, cysteine 204, and cysteine 207 each contribute to the Zn(2+) site. CXXCXGXG motif repeat units lie at residues cysteine 151–glycine 158, cysteine 168–glycine 175, cysteine 190–glycine 197, and cysteine 204–glycine 211.

It belongs to the DnaJ family. In terms of assembly, homodimer. Zn(2+) serves as cofactor.

It localises to the cytoplasm. Participates actively in the response to hyperosmotic and heat shock by preventing the aggregation of stress-denatured proteins and by disaggregating proteins, also in an autonomous, DnaK-independent fashion. Unfolded proteins bind initially to DnaJ; upon interaction with the DnaJ-bound protein, DnaK hydrolyzes its bound ATP, resulting in the formation of a stable complex. GrpE releases ADP from DnaK; ATP binding to DnaK triggers the release of the substrate protein, thus completing the reaction cycle. Several rounds of ATP-dependent interactions between DnaJ, DnaK and GrpE are required for fully efficient folding. Also involved, together with DnaK and GrpE, in the DNA replication of plasmids through activation of initiation proteins. The sequence is that of Chaperone protein DnaJ from Burkholderia vietnamiensis (strain G4 / LMG 22486) (Burkholderia cepacia (strain R1808)).